Here is a 381-residue protein sequence, read N- to C-terminus: Putative F-box/kelch-repeat protein At3g17570 (381 aa).

Residues 1-45 (MFTDLPRDLETEILSRVPATSLQKLKPTCKRWYTLFKDPEFLKKH) enclose the F-box domain. Kelch repeat units follow at residues 151–199 (SYKI…TLKG), 229–281 (LLYQ…KIVE), and 331–379 (RFYI…GGKR).

In Arabidopsis thaliana (Mouse-ear cress), this protein is Putative F-box/kelch-repeat protein At3g17570.